The primary structure comprises 324 residues: 4-hydroxybenzoyl-CoA reductase subunit beta (324 aa).

An FAD-binding PCMH-type domain is found at 2–217 (NILTDFRTHR…AAIEVPPTGA (216 aa)). Residues 29-36 (PLGAGTDL), Thr111, Asn115, and Gln118 contribute to the FAD site. The [4Fe-4S] cluster site is built by Cys122, Cys138, Cys146, and Cys155. The FAD site is built by Asp162 and Lys224.

Heterohexamer of two alpha, two beta and two gamma subunits. Requires FAD as cofactor. [4Fe-4S] cluster serves as cofactor.

It carries out the reaction oxidized 2[4Fe-4S]-[ferredoxin] + benzoyl-CoA + H2O = 4-hydroxybenzoyl-CoA + reduced 2[4Fe-4S]-[ferredoxin] + 2 H(+). Inactivated by low concentrations of cyanide in vitro. Its function is as follows. Component of a complex that catalyzes the reductive dehydroxylation of 4-hydroxybenzoyl-CoA to benzoyl-CoA. Reaction is not reversible. Is a key enzyme in the anaerobic degradation of phenolic compounds. This Thauera aromatica protein is 4-hydroxybenzoyl-CoA reductase subunit beta (hcrB).